A 134-amino-acid chain; its full sequence is Putative F-box protein R638 (134 aa).

An F-box domain is found at 5–52 (NIMNLLNEDCILHILSFLADKDKIQLSLSCKSNLKFLHKTIYDDIYFY).

The polypeptide is Putative F-box protein R638 (Acanthamoeba polyphaga mimivirus (APMV)).